The chain runs to 432 residues: MSIQAPRGFNDILPGEQYGWRDSYRWQRLEEIFREVARLYGYQELRPPMVEYVDLFIHGVGATTDIVTKEMFNITPRGDDPDARRMAMRPEFTAGLVRAWLENGLYNNPQPTKIFAYGPAFRYENVQKGRFRGFHQLDVEVFGAQDPAVDAEVIKLGLDVVARLGLTGLVVSVNSIGCPQCRPRYRQALQDHFRPHLGELCEDCNTRFEKNPLRLLDCKRDADHPAQRTAPVTLDYLCDDCRRHWEGLLSHLAAMGIPYQIDTRIVRGLDYYTKTVFEVLHPKLGAQSALWGGGRYDGLIEIVGGKPTPGVGFGMGMERVLMVLEEEGLTAPFADRPRLDVFVATLGEAARPVGLKLLYALRDAGLSADIDYLGRSLKAQMKYAGKQNSRYVVILGEDEVRQGVASVKHMDEGTQESVPLDQIISHLRRAEA.

This sequence belongs to the class-II aminoacyl-tRNA synthetase family. As to quaternary structure, homodimer.

It is found in the cytoplasm. The catalysed reaction is tRNA(His) + L-histidine + ATP = L-histidyl-tRNA(His) + AMP + diphosphate + H(+). In Symbiobacterium thermophilum (strain DSM 24528 / JCM 14929 / IAM 14863 / T), this protein is Histidine--tRNA ligase.